We begin with the raw amino-acid sequence, 1189 residues long: Disabled homolog 2-interacting protein (1189 aa).

A disordered region spans residues M1–V75. Residues L20–R38 show a composition bias toward basic residues. Basic and acidic residues predominate over residues P39 to G49. The span at S59–F73 shows a compositional bias: polar residues. The PH domain maps to S101–H202. The C2 domain occupies W193–Y311. The Ras-GAP domain occupies G387 to I595. The necessary for interaction with AKT1 stretch occupies residues L646 to L943. The segment covering L653–A668 has biased composition (polar residues). 2 disordered regions span residues L653–S679 and R715–Q738. The span at S669–S679 shows a compositional bias: low complexity. A compositionally biased stretch (polar residues) spans R715 to E731. S728 is subject to Phosphoserine; by MAP3K5 and RIPK1. S747 carries the post-translational modification Phosphoserine. Disordered stretches follow at residues V804–L823, P843–E865, S895–A998, E1015–E1034, and A1163–C1189. The segment covering E852 to E865 has biased composition (low complexity). Positions Q919–P931 are enriched in pro residues. Polar residues-rich tracts occupy residues L939–S955 and L967–G976. Residues S978 and S995 each carry the phosphoserine modification. The span at P1023–E1034 shows a compositional bias: basic and acidic residues. A coiled-coil region spans residues H1025–Y1159.

As to quaternary structure, on plasma membrane, exists in an inactive form complexed with TNFR1; in response to TNF-alpha, dissociates from TNFR1 complex, translocates to cytoplasm and forms part of an intracellular signaling complex comprising TRADD, RIPK1, TRAF2 and MAP3K5. Interacts with DAB1. Part of a cytoplasmic complex made of HIPK1, DAB2IP and MAP3K5 in response to TNF-alpha; this complex formation promotes MAP3K5-JNK activation and subsequent apoptosis. Interacts (via N-terminal domain) with JAK2; the interaction occurs in a IFNG/IFN-gamma-dependent manner and inhibits JAK2 autophosphorylation activity. Interacts (via C2 domain) with GSK3B; the interaction stimulates GSK3B kinase activation. Interacts (via C2 domain) with PPP2CA. Interacts (via proline-rich motif) with a regulatory p85 subunit (via SH3 domain) of the PI3K complex; the interaction inhibits the PI3K-AKT complex activity in a TNF-alpha-dependent manner in prostate cancer (PCa) cells. Interacts with AKT1; the interaction is increased in a TNF-alpha-induced manner. Interacts (via C2 domain and active form preferentially) with KDR/VEGFR2 (tyrosine-phosphorylated active form preferentially); the interaction occurs at the late phase of VEGFA response and inhibits KDR/VEGFR2 activity. Interacts (via N-terminus C2 domain) with MAP3K5 ('Ser-966' dephosphorylated form preferentially); the interaction occurs in a TNF-alpha-induced manner. Interacts (via Ras-GAP domain) with the catalytic subunit of protein phosphatase PP2A; the interaction occurs in resting endothelial cells, is further enhanced by TNF-alpha stimulation and is required to bridge PP2A to MAP3K5. Interacts (via C-terminus PER domain) with TRAF2 (via zinc fingers); the interaction occurs in a TNF-alpha-dependent manner. Interacts with 14-3-3 proteins; the interaction occurs in a TNF-alpha-dependent manner. Interacts (via Ras-GAP domain) with RIPK1 (via kinase domain); the interaction occurs in a TNF-alpha-dependent manner. Interacts (via PH domain) with ERN1. Interacts with TRAF2. Interacts (via NPXY motif) with DAB2 (via PID domain). Interacts with RAB40C; acts as a GAP for RAB40C. In terms of processing, in response to TNF-alpha-induction, phosphorylated at Ser-728; phosphorylation leads to a conformational change, and thus, increases its association with 14-3-3 proteins, MAP3K5, RIPK1 and TRAF2 in endothelial cells; also stimulates regulatory p85 subunit sequestring and PI3K-p85 complex activity inhibition. In terms of tissue distribution, expressed in vascular endothelium of muscle and aorta, in smooth muscle cells of aorta and epithelial cells of lung. Expressed throughout the brain, including olfactory bulb, hypothalamus, cerebellum and cerebral cortex. Expressed in the soma and processes of neurons in a variety of brain structures, including the developing cerebral cortex, CA1 pyramidal neurons and Purkinje cells. Poorly expressed in medulloblastoma cells compared to cerebellar precursor proliferating progenitor cells (at protein level). Highly expressed in the brain, salivary gland, and testis; moderate expression in kidney and heart. Low expression in the lung, seminal vesicle, ventral prostate, epididymis, liver, and bladder. Very low expression in the coagulation gland and skeleton muscles. Lowest expression seen in spleen.

The protein localises to the cytoplasm. The protein resides in the cell membrane. It localises to the membrane. Its subcellular location is the cell projection. It is found in the dendrite. In terms of biological role, functions as a scaffold protein implicated in the regulation of a large spectrum of both general and specialized signaling pathways. Involved in several processes such as innate immune response, inflammation and cell growth inhibition, apoptosis, cell survival, angiogenesis, cell migration and maturation. Also plays a role in cell cycle checkpoint control; reduces G1 phase cyclin levels resulting in G0/G1 cell cycle arrest. Mediates signal transduction by receptor-mediated inflammatory signals, such as the tumor necrosis factor (TNF), interferon (IFN) or lipopolysaccharide (LPS). Modulates the balance between phosphatidylinositol 3-kinase (PI3K)-AKT-mediated cell survival and apoptosis stimulated kinase (MAP3K5)-JNK signaling pathways; sequesters both AKT1 and MAP3K5 and counterbalances the activity of each kinase by modulating their phosphorylation status in response to pro-inflammatory stimuli. Acts as a regulator of the endoplasmic reticulum (ER) unfolded protein response (UPR) pathway; specifically involved in transduction of the ER stress-response to the JNK cascade through ERN1. Mediates TNF-alpha-induced apoptosis activation by facilitating dissociation of inhibitor 14-3-3 from MAP3K5; recruits the PP2A phosphatase complex which dephosphorylates MAP3K5 on 'Ser-966', leading to the dissociation of 13-3-3 proteins and activation of the MAP3K5-JNK signaling pathway in endothelial cells. Also mediates TNF/TRAF2-induced MAP3K5-JNK activation, while it inhibits CHUK-NF-kappa-B signaling. Acts a negative regulator in the IFN-gamma-mediated JAK-STAT signaling cascade by inhibiting smooth muscle cell (VSMCs) proliferation and intimal expansion, and thus, prevents graft arteriosclerosis (GA). Acts as a GTPase-activating protein (GAP) for the ADP ribosylation factor 6 (ARF6) and Ras. Promotes hydrolysis of the ARF6-bound GTP and thus, negatively regulates phosphatidylinositol 4,5-bisphosphate (PIP2)-dependent TLR4-TIRAP-MyD88 and NF-kappa-B signaling pathways in endothelial cells in response to lipopolysaccharides (LPS). Binds specifically to phosphatidylinositol 4-phosphate (PtdIns4P) and phosphatidylinositol 3-phosphate (PtdIns3P). In response to vascular endothelial growth factor (VEGFA), acts as a negative regulator of the VEGFR2-PI3K-mediated angiogenic signaling pathway by inhibiting endothelial cell migration and tube formation. In the developing brain, promotes both the transition from the multipolar to the bipolar stage and the radial migration of cortical neurons from the ventricular zone toward the superficial layer of the neocortex in a glial-dependent locomotion process. Probable downstream effector of the Reelin signaling pathway; promotes Purkinje cell (PC) dendrites development and formation of cerebellar synapses. Also functions as a tumor suppressor protein in prostate cancer progression; prevents cell proliferation and epithelial-to-mesenchymal transition (EMT) through activation of the glycogen synthase kinase-3 beta (GSK3B)-induced beta-catenin and inhibition of PI3K-AKT and Ras-MAPK survival downstream signaling cascades, respectively. The chain is Disabled homolog 2-interacting protein (Dab2ip) from Mus musculus (Mouse).